The following is a 343-amino-acid chain: Protein RecA (343 aa).

66–73 (GPESSGKT) contributes to the ATP binding site.

Belongs to the RecA family.

It is found in the cytoplasm. In terms of biological role, can catalyze the hydrolysis of ATP in the presence of single-stranded DNA, the ATP-dependent uptake of single-stranded DNA by duplex DNA, and the ATP-dependent hybridization of homologous single-stranded DNAs. It interacts with LexA causing its activation and leading to its autocatalytic cleavage. The polypeptide is Protein RecA (Dechloromonas aromatica (strain RCB)).